Reading from the N-terminus, the 155-residue chain is SsrA-binding protein (155 aa).

This sequence belongs to the SmpB family.

The protein resides in the cytoplasm. Required for rescue of stalled ribosomes mediated by trans-translation. Binds to transfer-messenger RNA (tmRNA), required for stable association of tmRNA with ribosomes. tmRNA and SmpB together mimic tRNA shape, replacing the anticodon stem-loop with SmpB. tmRNA is encoded by the ssrA gene; the 2 termini fold to resemble tRNA(Ala) and it encodes a 'tag peptide', a short internal open reading frame. During trans-translation Ala-aminoacylated tmRNA acts like a tRNA, entering the A-site of stalled ribosomes, displacing the stalled mRNA. The ribosome then switches to translate the ORF on the tmRNA; the nascent peptide is terminated with the 'tag peptide' encoded by the tmRNA and targeted for degradation. The ribosome is freed to recommence translation, which seems to be the essential function of trans-translation. The polypeptide is SsrA-binding protein (Bacillus mycoides (strain KBAB4) (Bacillus weihenstephanensis)).